The sequence spans 994 residues: Bifunctional glutamine synthetase adenylyltransferase/adenylyl-removing enzyme (994 aa).

Residues 1-487 (MVVTKLATQR…LHTKLFYQPL (487 aa)) form an adenylyl removase region. The segment at 492-994 (GPTGLEIAHG…KAVVRKVFGS (503 aa)) is adenylyl transferase.

Belongs to the GlnE family. It depends on Mg(2+) as a cofactor.

The enzyme catalyses [glutamine synthetase]-O(4)-(5'-adenylyl)-L-tyrosine + phosphate = [glutamine synthetase]-L-tyrosine + ADP. It carries out the reaction [glutamine synthetase]-L-tyrosine + ATP = [glutamine synthetase]-O(4)-(5'-adenylyl)-L-tyrosine + diphosphate. In terms of biological role, involved in the regulation of glutamine synthetase GlnA, a key enzyme in the process to assimilate ammonia. When cellular nitrogen levels are high, the C-terminal adenylyl transferase (AT) inactivates GlnA by covalent transfer of an adenylyl group from ATP to specific tyrosine residue of GlnA, thus reducing its activity. Conversely, when nitrogen levels are low, the N-terminal adenylyl removase (AR) activates GlnA by removing the adenylyl group by phosphorolysis, increasing its activity. The regulatory region of GlnE binds the signal transduction protein PII (GlnB) which indicates the nitrogen status of the cell. This is Bifunctional glutamine synthetase adenylyltransferase/adenylyl-removing enzyme from Mycobacterium bovis (strain ATCC BAA-935 / AF2122/97).